The chain runs to 353 residues: Bone morphogenetic protein 2 (353 aa).

A propeptide spanning residues 1–239 (GSLKRPEDLL…GHPLHKREKR (239 aa)) is cleaved from the precursor. Asn91, Asn121, and Asn157 each carry an N-linked (GlcNAc...) asparagine glycan. Positions 228–248 (GKGHPLHKREKRQAKHKQRKR) are disordered. The segment covering 231–248 (HPLHKREKRQAKHKQRKR) has biased composition (basic residues). Intrachain disulfides connect Cys253/Cys318, Cys282/Cys350, and Cys286/Cys352. Asn295 carries N-linked (GlcNAc...) asparagine glycosylation.

It belongs to the TGF-beta family. Homodimer; disulfide-linked.

The protein resides in the secreted. In terms of biological role, negatively regulates the structure and function of the limb apical ectodermal ridge. The polypeptide is Bone morphogenetic protein 2 (BMP2) (Gallus gallus (Chicken)).